Reading from the N-terminus, the 515-residue chain is Protein translocase subunit SecD (515 aa).

The next 6 helical transmembrane spans lie at 5-25 (LIAK…LATP), 353-373 (KGIL…VAYY), 375-395 (LSGL…MGLL), 398-418 (FGAT…GIAV), 450-470 (FSTI…LFQF), and 477-497 (GFAV…ILCT).

This sequence belongs to the SecD/SecF family. SecD subfamily. As to quaternary structure, forms a complex with SecF. Part of the essential Sec protein translocation apparatus which comprises SecA, SecYEG and auxiliary proteins SecDF. Other proteins may also be involved.

The protein localises to the cell inner membrane. In terms of biological role, part of the Sec protein translocase complex. Interacts with the SecYEG preprotein conducting channel. SecDF uses the proton motive force (PMF) to complete protein translocation after the ATP-dependent function of SecA. The chain is Protein translocase subunit SecD from Desulfurispirillum indicum (strain ATCC BAA-1389 / DSM 22839 / S5).